A 385-amino-acid chain; its full sequence is Odorant receptor 82a (385 aa).

The Cytoplasmic portion of the chain corresponds to 1–32 (MGRLFQLQEYCLRAMGHKDDMDSTDSTALSLK). A helical membrane pass occupies residues 33–53 (HISSLIFVISAQYPLISYVAY). Residues 54-62 (NRNDMEKVT) lie on the Extracellular side of the membrane. The chain crosses the membrane as a helical span at residues 63-83 (ACLSVVFTNMLTVIKISTFLA). Residues 84-131 (NRKDFWEMIHRFRKMHEQSASHIPRYREGLDYVAEANKLASFLGRAYC) lie on the Cytoplasmic side of the membrane. The helical transmembrane segment at 132 to 152 (VSCGLTGLYFMLGPIVKIGVC) threads the bilayer. Residues 153 to 186 (RWHGTTCDKELPMPMKFPFNDLESPGYEVCFLYT) are Extracellular-facing. A helical transmembrane segment spans residues 187–207 (VLVTVVVVAYASAVDGLFISF). Residues 208 to 257 (AINLRAHFQTLQRQIENWEFPSSEPDTQIRLKSIVEYHVLLLSLSRKLRS) are Cytoplasmic-facing. A helical membrane pass occupies residues 258–278 (IYTPTVMGQFVITSLQVGVII). Residues 279–290 (YQLVTNMDSVMD) are Extracellular-facing. A helical membrane pass occupies residues 291-311 (LLLYASFFGSIMLQLFIYCYG). Over 312 to 357 (GEIIKAESLQVDTAVRLSNWHLASPKTRTSLSLIILQSQKEVLIRA) the chain is Cytoplasmic. A helical membrane pass occupies residues 358–378 (GFFVASLANFVGICRTALSLI). The Extracellular segment spans residues 379-385 (TLIKSIE).

Belongs to the insect chemoreceptor superfamily. Heteromeric odorant receptor channel (TC 1.A.69) family. Or1a subfamily. Interacts with Orco. Complexes exist early in the endomembrane system in olfactory sensory neurons (OSNs), coupling these complexes to the conserved ciliary trafficking pathway. Expressed in olfactory sensory neurons in the antenna.

The protein resides in the cell membrane. Its function is as follows. Odorant receptor which mediates acceptance or avoidance behavior, depending on its substrates. The odorant receptor repertoire encodes a large collection of odor stimuli that vary widely in identity, intensity, and duration. May form a complex with Orco to form odorant-sensing units, providing sensitive and prolonged odorant signaling and calcium permeability. The polypeptide is Odorant receptor 82a (Or82a) (Drosophila melanogaster (Fruit fly)).